The following is a 264-amino-acid chain: Synaptophysin-like protein 2 (264 aa).

Residues 1 to 33 (MSSTESPGRTSDKSPRQQVDRLLLGLRWQRLEE) are Cytoplasmic-facing. The 209-residue stretch at 30 to 238 (RLEEPLGFIK…NCWFVFKETP (209 aa)) folds into the MARVEL domain. The chain crosses the membrane as a helical span at residues 34-54 (PLGFIKVLQWLFAIFAFGSCG). At 55 to 116 (SYSGETGALV…LMGDFSAPAE (62 aa)) the chain is on the vesicular side. Residues 117-137 (FFVTLGIFSFFYTMAALVIYL) form a helical membrane-spanning segment. At 138 to 150 (RFHKLYTENKRFP) the chain is on the cytoplasmic side. The chain crosses the membrane as a helical span at residues 151–171 (LVDFCVTVSFTFFWLVAAAAW). At 172 to 213 (GKGLTDVKGATRPSSLTAAMSVCHGEEAVCSAGATPSMGLAN) the chain is on the vesicular side. A glycan (N-linked (GlcNAc...) asparagine) is linked at N213. Residues 214 to 234 (LSVLFGFINFFLWAGNCWFVF) traverse the membrane as a helical segment. Over 235 to 264 (KETPWHGQGQDQGQGPSQESAAEQGAVEKQ) the chain is Cytoplasmic. A disordered region spans residues 242-264 (QGQDQGQGPSQESAAEQGAVEKQ).

The protein belongs to the synaptophysin/synaptobrevin family. As to expression, expressed abundantly in skeletal muscle and at lower levels in the kidney.

Its subcellular location is the membrane. Functionally, involved in communication between the T-tubular and junctional sarcoplasmic reticulum (SR) membranes. The protein is Synaptophysin-like protein 2 (Sypl2) of Mus musculus (Mouse).